We begin with the raw amino-acid sequence, 291 residues long: Phosphatidylserine decarboxylase proenzyme (291 aa).

Residues Asp90, His147, and Ser253 each act as charge relay system; for autoendoproteolytic cleavage activity in the active site. The active-site Schiff-base intermediate with substrate; via pyruvic acid; for decarboxylase activity is the Ser253. At Ser253 the chain carries Pyruvic acid (Ser); by autocatalysis.

This sequence belongs to the phosphatidylserine decarboxylase family. PSD-B subfamily. Prokaryotic type I sub-subfamily. As to quaternary structure, heterodimer of a large membrane-associated beta subunit and a small pyruvoyl-containing alpha subunit. It depends on pyruvate as a cofactor. Post-translationally, is synthesized initially as an inactive proenzyme. Formation of the active enzyme involves a self-maturation process in which the active site pyruvoyl group is generated from an internal serine residue via an autocatalytic post-translational modification. Two non-identical subunits are generated from the proenzyme in this reaction, and the pyruvate is formed at the N-terminus of the alpha chain, which is derived from the carboxyl end of the proenzyme. The autoendoproteolytic cleavage occurs by a canonical serine protease mechanism, in which the side chain hydroxyl group of the serine supplies its oxygen atom to form the C-terminus of the beta chain, while the remainder of the serine residue undergoes an oxidative deamination to produce ammonia and the pyruvoyl prosthetic group on the alpha chain. During this reaction, the Ser that is part of the protease active site of the proenzyme becomes the pyruvoyl prosthetic group, which constitutes an essential element of the active site of the mature decarboxylase.

It localises to the cell membrane. The enzyme catalyses a 1,2-diacyl-sn-glycero-3-phospho-L-serine + H(+) = a 1,2-diacyl-sn-glycero-3-phosphoethanolamine + CO2. The protein operates within phospholipid metabolism; phosphatidylethanolamine biosynthesis; phosphatidylethanolamine from CDP-diacylglycerol: step 2/2. Functionally, catalyzes the formation of phosphatidylethanolamine (PtdEtn) from phosphatidylserine (PtdSer). This chain is Phosphatidylserine decarboxylase proenzyme, found in Photobacterium profundum (strain SS9).